Reading from the N-terminus, the 37-residue chain is Large ribosomal subunit protein bL36A (37 aa).

This sequence belongs to the bacterial ribosomal protein bL36 family.

This is Large ribosomal subunit protein bL36A from Clavibacter sepedonicus (Clavibacter michiganensis subsp. sepedonicus).